We begin with the raw amino-acid sequence, 360 residues long: Phosphoserine aminotransferase (360 aa).

An L-glutamate-binding site is contributed by arginine 42. Residues 76 to 77, tryptophan 102, threonine 153, aspartate 172, and glutamine 195 each bind pyridoxal 5'-phosphate; that span reads AR. Lysine 196 is subject to N6-(pyridoxal phosphate)lysine. 237–238 is a binding site for pyridoxal 5'-phosphate; that stretch reads NT.

Belongs to the class-V pyridoxal-phosphate-dependent aminotransferase family. SerC subfamily. In terms of assembly, homodimer. It depends on pyridoxal 5'-phosphate as a cofactor.

It is found in the cytoplasm. The catalysed reaction is O-phospho-L-serine + 2-oxoglutarate = 3-phosphooxypyruvate + L-glutamate. It catalyses the reaction 4-(phosphooxy)-L-threonine + 2-oxoglutarate = (R)-3-hydroxy-2-oxo-4-phosphooxybutanoate + L-glutamate. It participates in amino-acid biosynthesis; L-serine biosynthesis; L-serine from 3-phospho-D-glycerate: step 2/3. Its pathway is cofactor biosynthesis; pyridoxine 5'-phosphate biosynthesis; pyridoxine 5'-phosphate from D-erythrose 4-phosphate: step 3/5. Functionally, catalyzes the reversible conversion of 3-phosphohydroxypyruvate to phosphoserine and of 3-hydroxy-2-oxo-4-phosphonooxybutanoate to phosphohydroxythreonine. The sequence is that of Phosphoserine aminotransferase from Aliivibrio fischeri (strain ATCC 700601 / ES114) (Vibrio fischeri).